Here is a 372-residue protein sequence, read N- to C-terminus: Chloroplast protein FOR GROWTH AND FERTILITY 2 (372 aa).

The disordered stretch occupies residues 1-20; the sequence is MDRLLQPPSSHSIAPSKFQS. The N-terminal 78 residues, 1–78, are a transit peptide targeting the chloroplast; that stretch reads MDRLLQPPSS…NQSSNFLIAS (78 aa). Over residues 7–20 the composition is skewed to polar residues; sequence PPSSHSIAPSKFQS. The next 7 helical transmembrane spans lie at 109–129, 161–181, 195–215, 231–251, 281–301, 309–329, and 352–372; these read VILVSAIAALLLNPILVPPAF, FFAGCLHTLSGPDHLAALAPL, ALWGCGHDAGQLIFGLLFLLL, VVGLTLLVIGAMGIKEASEMP, GIVHGLQPDALMMVLPALALP, FLIMFLIGTVIAMGSYTVFIG, and LVAIGLGLAIIVSQFFGFSLY.

Mostly expressed in leaves, stems and flowers, to a lower extent, in roots, floral bud, inflorescence and siliques, and, barely, in seedlings.

Its subcellular location is the plastid. The protein localises to the chloroplast membrane. The protein resides in the plastid membrane. Functionally, together with CGF1, essential protein which supports female gametogenesis and embryogenesis, probably by securing local energy supply. The chain is Chloroplast protein FOR GROWTH AND FERTILITY 2 from Arabidopsis thaliana (Mouse-ear cress).